The following is a 185-amino-acid chain: Elongation factor P (185 aa).

This sequence belongs to the elongation factor P family.

The protein localises to the cytoplasm. It participates in protein biosynthesis; polypeptide chain elongation. Its function is as follows. Involved in peptide bond synthesis. Stimulates efficient translation and peptide-bond synthesis on native or reconstituted 70S ribosomes in vitro. Probably functions indirectly by altering the affinity of the ribosome for aminoacyl-tRNA, thus increasing their reactivity as acceptors for peptidyl transferase. This Nitratidesulfovibrio vulgaris (strain DSM 19637 / Miyazaki F) (Desulfovibrio vulgaris) protein is Elongation factor P.